We begin with the raw amino-acid sequence, 755 residues long: Serine/threonine-protein kinase GA29083 (755 aa).

Residues 18–52 (QASASGSGTPKKTAASSAAAQNSKQLLDQLSQQQK) are compositionally biased toward low complexity. The tract at residues 18-128 (QASASGSGTP…GSANTNGSAS (111 aa)) is disordered. Composition is skewed to basic and acidic residues over residues 53 to 66 (AQEEAETHSRRDCD) and 74 to 84 (EPEKDLDELRD). Polar residues predominate over residues 87 to 99 (GSLTGSGSVGKSN). The segment covering 100-128 (GSLSGASSTTSAPAGTSTPGSANTNGSAS) has biased composition (low complexity). 2 Doublecortin domains span residues 157-243 (HRIK…VDYN) and 314-397 (RIVT…VEDF). Residues 484 to 742 (YTLSQIIGDG…SEDILDHYWT (259 aa)) form the Protein kinase domain. ATP contacts are provided by residues 490–498 (IGDGNFAIV) and Lys-513. Asp-605 functions as the Proton acceptor in the catalytic mechanism.

Belongs to the protein kinase superfamily. CAMK Ser/Thr protein kinase family. CaMK subfamily.

It carries out the reaction L-seryl-[protein] + ATP = O-phospho-L-seryl-[protein] + ADP + H(+). The enzyme catalyses L-threonyl-[protein] + ATP = O-phospho-L-threonyl-[protein] + ADP + H(+). In Drosophila pseudoobscura pseudoobscura (Fruit fly), this protein is Serine/threonine-protein kinase GA29083.